Reading from the N-terminus, the 352-residue chain is Biotin synthase (352 aa).

A Radical SAM core domain is found at 44–262; that stretch reads NRVQVSTLLS…LAVARILMPK (219 aa). Residues C59, C63, and C66 each contribute to the [4Fe-4S] cluster site. [2Fe-2S] cluster contacts are provided by C103, C134, C194, and R266.

This sequence belongs to the radical SAM superfamily. Biotin synthase family. Homodimer. It depends on [4Fe-4S] cluster as a cofactor. [2Fe-2S] cluster serves as cofactor.

The catalysed reaction is (4R,5S)-dethiobiotin + (sulfur carrier)-SH + 2 reduced [2Fe-2S]-[ferredoxin] + 2 S-adenosyl-L-methionine = (sulfur carrier)-H + biotin + 2 5'-deoxyadenosine + 2 L-methionine + 2 oxidized [2Fe-2S]-[ferredoxin]. It participates in cofactor biosynthesis; biotin biosynthesis; biotin from 7,8-diaminononanoate: step 2/2. In terms of biological role, catalyzes the conversion of dethiobiotin (DTB) to biotin by the insertion of a sulfur atom into dethiobiotin via a radical-based mechanism. This Pseudomonas putida (strain GB-1) protein is Biotin synthase.